Here is an 81-residue protein sequence, read N- to C-terminus: Cytotoxin 2 (81 aa).

A signal peptide spans 1–21; it reads MKTLLLTLVVVTIVCLDLGYT. 4 disulfides stabilise this stretch: C24/C42, C35/C59, C63/C74, and C75/C80.

The protein belongs to the three-finger toxin family. Short-chain subfamily. Type IA cytotoxin sub-subfamily. As to quaternary structure, monomer in solution; Homodimer and oligomer in the presence of negatively charged lipids forming a pore with a size ranging between 20 and 30 Angstroms. Expressed by the venom gland.

The protein resides in the secreted. The protein localises to the target cell membrane. In terms of biological role, basic protein that binds to cell membrane and depolarizes cardiomyocytes. It also shows lytic activities, but 2-fold less important than that of CTX-A4. It binds to the integrin alpha-V/beta-3 (ITGAV/ITGB3) with a moderate affinity. It may interact with sulfatides in the cell membrane which induces pore formation and cell internalization and is responsible for cytotoxicity in cardiomyocytes. It may also target the mitochondrial membrane and induce mitochondrial swelling and fragmentation. This chain is Cytotoxin 2, found in Naja atra (Chinese cobra).